The sequence spans 388 residues: Galactokinase (388 aa).

32–35 lines the substrate pocket; that stretch reads EHTD. Residues serine 66 and 123-129 contribute to the ATP site; that span reads GASLSSS. Residues serine 129 and glutamate 161 each contribute to the Mg(2+) site. Aspartate 173 functions as the Proton acceptor in the catalytic mechanism. Tyrosine 223 is a binding site for substrate.

The protein belongs to the GHMP kinase family. GalK subfamily.

Its subcellular location is the cytoplasm. It carries out the reaction alpha-D-galactose + ATP = alpha-D-galactose 1-phosphate + ADP + H(+). It functions in the pathway carbohydrate metabolism; galactose metabolism. Its function is as follows. Catalyzes the transfer of the gamma-phosphate of ATP to D-galactose to form alpha-D-galactose-1-phosphate (Gal-1-P). The chain is Galactokinase from Staphylococcus carnosus (strain TM300).